Reading from the N-terminus, the 169-residue chain is Transmembrane protein B169L (169 aa).

The next 2 membrane-spanning stretches (helical) occupy residues 28–48 and 60–80; these read NPFIVALIITAVVLVVFFAIC and TAIYVYICIVALLFLHYYVLN. An N-linked (GlcNAc...) asparagine; by host glycan is attached at Asn-88. The disordered stretch occupies residues 107-169; sequence DEIIPPISPP…EVIMPSQYNN (63 aa). The span at 144 to 154 shows a compositional bias: low complexity; it reads SKPASSADSKP.

Belongs to the asfivirus B169L family.

The protein resides in the host membrane. It is found in the virion. In Ornithodoros (relapsing fever ticks), this protein is Transmembrane protein B169L.